Here is a 106-residue protein sequence, read N- to C-terminus: Urease subunit beta (106 aa).

Belongs to the urease beta subunit family. As to quaternary structure, heterotrimer of UreA (gamma), UreB (beta) and UreC (alpha) subunits. Three heterotrimers associate to form the active enzyme.

The protein resides in the cytoplasm. The catalysed reaction is urea + 2 H2O + H(+) = hydrogencarbonate + 2 NH4(+). It participates in nitrogen metabolism; urea degradation; CO(2) and NH(3) from urea (urease route): step 1/1. In Prochlorococcus marinus (strain MIT 9215), this protein is Urease subunit beta.